The following is a 141-amino-acid chain: Auxin-responsive protein SAUR63 (141 aa).

Belongs to the ARG7 family. In terms of tissue distribution, expressed in hypocotyls, cotyledons, petioles, young rosette leaves, apical portion of inflorescence stems, stamen filaments and petals.

It localises to the cell membrane. In terms of biological role, may promote auxin-stimulated organ elongation, such as hypocotyls, stamen filaments and petals. In Arabidopsis thaliana (Mouse-ear cress), this protein is Auxin-responsive protein SAUR63.